Reading from the N-terminus, the 162-residue chain is Shikimate kinase (162 aa).

10–15 (GAGKST) is a binding site for ATP. Position 14 (serine 14) interacts with Mg(2+). Substrate-binding residues include aspartate 28, arginine 52, and glycine 73. ATP is bound at residue arginine 113. Arginine 129 contacts substrate.

This sequence belongs to the shikimate kinase family. As to quaternary structure, monomer. Requires Mg(2+) as cofactor.

The protein resides in the cytoplasm. It catalyses the reaction shikimate + ATP = 3-phosphoshikimate + ADP + H(+). It participates in metabolic intermediate biosynthesis; chorismate biosynthesis; chorismate from D-erythrose 4-phosphate and phosphoenolpyruvate: step 5/7. In terms of biological role, catalyzes the specific phosphorylation of the 3-hydroxyl group of shikimic acid using ATP as a cosubstrate. This is Shikimate kinase from Lactococcus lactis subsp. cremoris (strain MG1363).